We begin with the raw amino-acid sequence, 947 residues long: Protein NLP8 (947 aa).

Disordered stretches follow at residues Arg114 to Gly135, Ser509 to Ser533, and Ser550 to Val591. The segment covering Arg126–Gly135 has biased composition (basic and acidic residues). Polar residues-rich tracts occupy residues Ser522–Ser533 and Ser550–Gln572. Over residues Asp573–Thr587 the composition is skewed to basic and acidic residues. The RWP-RK domain occupies Ala577 to Gly671. A coiled-coil region spans residues Arg646–Gln666. A compositionally biased stretch (low complexity) spans Ser805–Ser815. A disordered region spans residues Ser805–Glu828. Residues Thr847–Leu929 form the PB1 domain.

The protein localises to the nucleus. Functionally, probable transcription factor. The polypeptide is Protein NLP8 (NLP8) (Arabidopsis thaliana (Mouse-ear cress)).